The sequence spans 290 residues: Ribosomal RNA small subunit methyltransferase A (290 aa).

Asn-27, Leu-29, Gly-54, Glu-75, Asp-100, and Asn-125 together coordinate S-adenosyl-L-methionine.

The protein belongs to the class I-like SAM-binding methyltransferase superfamily. rRNA adenine N(6)-methyltransferase family. RsmA subfamily.

The protein resides in the cytoplasm. The catalysed reaction is adenosine(1518)/adenosine(1519) in 16S rRNA + 4 S-adenosyl-L-methionine = N(6)-dimethyladenosine(1518)/N(6)-dimethyladenosine(1519) in 16S rRNA + 4 S-adenosyl-L-homocysteine + 4 H(+). Functionally, specifically dimethylates two adjacent adenosines (A1518 and A1519) in the loop of a conserved hairpin near the 3'-end of 16S rRNA in the 30S particle. May play a critical role in biogenesis of 30S subunits. The chain is Ribosomal RNA small subunit methyltransferase A from Streptococcus pneumoniae (strain ATCC 700669 / Spain 23F-1).